A 309-amino-acid chain; its full sequence is Protein-L-isoaspartate O-methyltransferase (309 aa).

Residues 1–46 (MSGERAKRFPLALEDLKRAPRKSDGRAGERHAAIAAPKAADKPAAV) form a disordered region. The span at 14–32 (EDLKRAPRKSDGRAGERHA) shows a compositional bias: basic and acidic residues. The segment covering 33–46 (AIAAPKAADKPAAV) has biased composition (low complexity). Residue Ser156 is part of the active site.

Belongs to the methyltransferase superfamily. L-isoaspartyl/D-aspartyl protein methyltransferase family.

It localises to the cytoplasm. The enzyme catalyses [protein]-L-isoaspartate + S-adenosyl-L-methionine = [protein]-L-isoaspartate alpha-methyl ester + S-adenosyl-L-homocysteine. In terms of biological role, catalyzes the methyl esterification of L-isoaspartyl residues in peptides and proteins that result from spontaneous decomposition of normal L-aspartyl and L-asparaginyl residues. It plays a role in the repair and/or degradation of damaged proteins. The sequence is that of Protein-L-isoaspartate O-methyltransferase from Burkholderia vietnamiensis (strain G4 / LMG 22486) (Burkholderia cepacia (strain R1808)).